A 270-amino-acid chain; its full sequence is Formamidopyrimidine-DNA glycosylase (270 aa).

The Schiff-base intermediate with DNA role is filled by proline 2. Glutamate 3 (proton donor) is an active-site residue. The active-site Proton donor; for beta-elimination activity is the lysine 58. DNA is bound by residues histidine 91, arginine 110, and arginine 151. An FPG-type zinc finger spans residues 236–270; the sequence is FVYGRGGQPCKVCGTELREVKLGQRASVFCPKCQR. Arginine 260 functions as the Proton donor; for delta-elimination activity in the catalytic mechanism.

This sequence belongs to the FPG family. As to quaternary structure, monomer. The cofactor is Zn(2+).

It catalyses the reaction Hydrolysis of DNA containing ring-opened 7-methylguanine residues, releasing 2,6-diamino-4-hydroxy-5-(N-methyl)formamidopyrimidine.. The enzyme catalyses 2'-deoxyribonucleotide-(2'-deoxyribose 5'-phosphate)-2'-deoxyribonucleotide-DNA = a 3'-end 2'-deoxyribonucleotide-(2,3-dehydro-2,3-deoxyribose 5'-phosphate)-DNA + a 5'-end 5'-phospho-2'-deoxyribonucleoside-DNA + H(+). In terms of biological role, involved in base excision repair of DNA damaged by oxidation or by mutagenic agents. Acts as a DNA glycosylase that recognizes and removes damaged bases. Has a preference for oxidized purines, such as 7,8-dihydro-8-oxoguanine (8-oxoG). Has AP (apurinic/apyrimidinic) lyase activity and introduces nicks in the DNA strand. Cleaves the DNA backbone by beta-delta elimination to generate a single-strand break at the site of the removed base with both 3'- and 5'-phosphates. The protein is Formamidopyrimidine-DNA glycosylase of Pseudomonas entomophila (strain L48).